Reading from the N-terminus, the 102-residue chain is Small ribosomal subunit protein uS10 (102 aa).

It belongs to the universal ribosomal protein uS10 family. As to quaternary structure, part of the 30S ribosomal subunit.

Its function is as follows. Involved in the binding of tRNA to the ribosomes. The sequence is that of Small ribosomal subunit protein uS10 from Mycoplasma mobile (strain ATCC 43663 / 163K / NCTC 11711) (Mesomycoplasma mobile).